A 115-amino-acid chain; its full sequence is Large ribosomal subunit protein uL18 (115 aa).

Belongs to the universal ribosomal protein uL18 family. Part of the 50S ribosomal subunit; part of the 5S rRNA/L5/L18/L25 subcomplex. Contacts the 5S and 23S rRNAs.

In terms of biological role, this is one of the proteins that bind and probably mediate the attachment of the 5S RNA into the large ribosomal subunit, where it forms part of the central protuberance. This Mycoplasma genitalium (strain ATCC 33530 / DSM 19775 / NCTC 10195 / G37) (Mycoplasmoides genitalium) protein is Large ribosomal subunit protein uL18.